Here is an 816-residue protein sequence, read N- to C-terminus: Microbial collagenase (816 aa).

An N-terminal signal peptide occupies residues 1–27; the sequence is MSHIRFFPRHRLALACMLASVSSFSFA. His435 contacts Zn(2+). Glu436 is an active-site residue. His439 contacts Zn(2+).

This sequence belongs to the peptidase M9A family. It depends on Zn(2+) as a cofactor.

It is found in the secreted. The enzyme catalyses Digestion of native collagen in the triple helical region at Xaa-|-Gly bonds. With synthetic peptides, a preference is shown for Gly at P3 and P1', Pro and Ala at P2 and P2', and hydroxyproline, Ala or Arg at P3'.. Possesses gelatinolytic activity. Can cause weak haemolysis on blood agar. The polypeptide is Microbial collagenase (prt) (Vibrio parahaemolyticus serotype O3:K6 (strain RIMD 2210633)).